The following is a 209-amino-acid chain: Protein GrpE (209 aa).

Positions 1-18 (MKIFNKDGNKNSKEDTKA) are enriched in basic and acidic residues. The tract at residues 1 to 60 (MKIFNKDGNKNSKEDTKAGAENSEAQNSGSSAEEVNKARENPEEASASSEAEKSPEVKCQ) is disordered. The segment covering 23-33 (SEAQNSGSSAE) has biased composition (polar residues). Residues 50–60 (EAEKSPEVKCQ) show a composition bias toward basic and acidic residues.

The protein belongs to the GrpE family. In terms of assembly, homodimer.

It is found in the cytoplasm. Its function is as follows. Participates actively in the response to hyperosmotic and heat shock by preventing the aggregation of stress-denatured proteins, in association with DnaK and GrpE. It is the nucleotide exchange factor for DnaK and may function as a thermosensor. Unfolded proteins bind initially to DnaJ; upon interaction with the DnaJ-bound protein, DnaK hydrolyzes its bound ATP, resulting in the formation of a stable complex. GrpE releases ADP from DnaK; ATP binding to DnaK triggers the release of the substrate protein, thus completing the reaction cycle. Several rounds of ATP-dependent interactions between DnaJ, DnaK and GrpE are required for fully efficient folding. This is Protein GrpE from Methanosarcina barkeri (strain Fusaro / DSM 804).